Here is a 398-residue protein sequence, read N- to C-terminus: Exodeoxyribonuclease 7 large subunit (398 aa).

It belongs to the XseA family. As to quaternary structure, heterooligomer composed of large and small subunits.

The protein resides in the cytoplasm. The enzyme catalyses Exonucleolytic cleavage in either 5'- to 3'- or 3'- to 5'-direction to yield nucleoside 5'-phosphates.. Its function is as follows. Bidirectionally degrades single-stranded DNA into large acid-insoluble oligonucleotides, which are then degraded further into small acid-soluble oligonucleotides. This Salinibacter ruber (strain DSM 13855 / M31) protein is Exodeoxyribonuclease 7 large subunit.